The primary structure comprises 157 residues: Heavy metal-associated isoprenylated plant protein 16 (157 aa).

The 70-residue stretch at 2–71 folds into the HMA domain; sequence KQKILIRIAM…KVAFAELVSV (70 aa). Residues 73–115 form a disordered region; the sequence is KVEPPKDGDKKPEEEKKPEEKKPEEKKPEEKKPEPCCQPWQKP. The segment covering 75-106 has biased composition (basic and acidic residues); the sequence is EPPKDGDKKPEEEKKPEEKKPEEKKPEEKKPE. C154 is modified (cysteine methyl ester). C154 is lipidated: S-farnesyl cysteine. The propeptide at 155 to 157 is removed in mature form; sequence RIM.

The protein belongs to the HIPP family.

Its function is as follows. Probable heavy-metal-binding protein. The protein is Heavy metal-associated isoprenylated plant protein 16 of Arabidopsis thaliana (Mouse-ear cress).